Reading from the N-terminus, the 427-residue chain is Light-independent protochlorophyllide reductase subunit N (427 aa).

Positions 28, 53, and 114 each coordinate [4Fe-4S] cluster.

Belongs to the BchN/ChlN family. In terms of assembly, protochlorophyllide reductase is composed of three subunits; BchL, BchN and BchB. Forms a heterotetramer of two BchB and two BchN subunits. The cofactor is [4Fe-4S] cluster.

The enzyme catalyses chlorophyllide a + oxidized 2[4Fe-4S]-[ferredoxin] + 2 ADP + 2 phosphate = protochlorophyllide a + reduced 2[4Fe-4S]-[ferredoxin] + 2 ATP + 2 H2O. The protein operates within porphyrin-containing compound metabolism; bacteriochlorophyll biosynthesis (light-independent). Functionally, component of the dark-operative protochlorophyllide reductase (DPOR) that uses Mg-ATP and reduced ferredoxin to reduce ring D of protochlorophyllide (Pchlide) to form chlorophyllide a (Chlide). This reaction is light-independent. The NB-protein (BchN-BchB) is the catalytic component of the complex. In Dinoroseobacter shibae (strain DSM 16493 / NCIMB 14021 / DFL 12), this protein is Light-independent protochlorophyllide reductase subunit N.